A 274-amino-acid chain; its full sequence is Ribosomal RNA small subunit methyltransferase A (274 aa).

S-adenosyl-L-methionine-binding residues include Asn27, Leu29, Gly54, Glu75, Asp100, and Asn121.

The protein belongs to the class I-like SAM-binding methyltransferase superfamily. rRNA adenine N(6)-methyltransferase family. RsmA subfamily.

It is found in the cytoplasm. The enzyme catalyses adenosine(1518)/adenosine(1519) in 16S rRNA + 4 S-adenosyl-L-methionine = N(6)-dimethyladenosine(1518)/N(6)-dimethyladenosine(1519) in 16S rRNA + 4 S-adenosyl-L-homocysteine + 4 H(+). Its function is as follows. Specifically dimethylates two adjacent adenosines (A1518 and A1519) in the loop of a conserved hairpin near the 3'-end of 16S rRNA in the 30S particle. May play a critical role in biogenesis of 30S subunits. This chain is Ribosomal RNA small subunit methyltransferase A, found in Acinetobacter baylyi (strain ATCC 33305 / BD413 / ADP1).